A 491-amino-acid chain; its full sequence is Cytochrome P450 monooxygenase olcB (491 aa).

A helical membrane pass occupies residues 5-27 (LLLSLSVCLLYVFITAFWNLYIH). C435 lines the heme pocket.

Belongs to the cytochrome P450 family. Heme serves as cofactor.

The protein localises to the membrane. The protein operates within secondary metabolite biosynthesis; terpenoid biosynthesis. Functionally, cytochrome P450 monooxygenase; part of the gene cluster that mediates the biosynthesis of 15-deoxyoxalicine B. The first step of the pathway is the synthesis of nicotinyl-CoA from nicotinic acid by the nicotinic acid-CoA ligase olcI. Nicotinyl-CoA is then a substrate of polyketide synthase olcA to produce 4-hydroxy-6-(3-pyridinyl)-2H-pyran-2-one (HPPO) which is further prenylated by the polyprenyl transferase olcH to yield geranylgeranyl-HPPO. Geranylgeranyl pyrophosphate is provided by the cluster-specific geranylgeranyl pyrophosphate synthase olcC. The FAD-dependent monooxygenase olcE catalyzes the epoxidation of geranylgeranyl-HPPO and the terpene cyclase olcD catalyzes the cyclization of the terpenoid component, resulting in the formation of the tricyclic terpene moiety seen in predecaturin E. The cytochrome P450 monooxygenase then catalyzes the allylic oxidation of predecaturin E, which is followed by spirocylization with concomitant loss of one molecule of water to form decaturin E. Decaturin E is the substrate of the cytochrome P450 monooxygenase olcJ which hydroxylates it at the C-29 position to form decaturin F. The short-chain dehydrogenase/reductase olcF may catalyze the oxidation of decaturin F to generate the 29-hydroxyl-27-one intermediate, and subsequent hemiacetal formation probably leads to the formation of decaturin C. The dioxygenase olcK may be a peroxisomal enzyme that catalyzes the hydroxylation of decaturin C into decaturin A once decaturin C is shuttled into the peroxisome by the MFS transporter olcL. Finally the cytochrome P450 monooxygenase olcB catalyzes the oxidative rearrangement to yield 15-deoxyoxalicine B. In the absence of olcJ, decaturin E may be shunted to a pathway in which it is oxidized to a ketone, possibly by olcF, to form decaturin D, which undergoes further allylic oxidation to yield decaturin G. Moreover, in the absence of oclK or oclL, oclB can convert decaturin C into 15-deoxyoxalicine A. The chain is Cytochrome P450 monooxygenase olcB from Penicillium canescens.